The following is a 431-amino-acid chain: Saglin (431 aa).

An N-terminal signal peptide occupies residues 1–39; that stretch reads MSVRDYSGVQVISSRKHRSMSRLPTVLLLLASAAVLAAG. N-linked (GlcNAc...) asparagine glycosylation occurs at asparagine 95. Positions 120–169 form a coiled coil; it reads LDDAQRQMEQEHRQYAATLEEQLHAAQQETQQEQEMKKALQKQLDALTDS.

In terms of assembly, homodimer. Female salivary gland (at protein level). Not detected in female carcass without salivary glands, midgut and hemolymph (at protein level). Probably not expressed in male tissues.

The protein localises to the secreted. Functionally, (Microbial infection) Facilitates efficient midgut colonization by Plasmodium berghei parasites. Promotes successful transmission of Plasmodium berghei at low infection densities. (Microbial infection) Facilitates efficient midgut colonization by Plasmodium falciparum. The polypeptide is Saglin (Anopheles coluzzii (African malaria mosquito)).